Consider the following 466-residue polypeptide: Ribulose bisphosphate carboxylase large chain (466 aa).

Lysine 4 is subject to N6,N6,N6-trimethyllysine. Substrate contacts are provided by asparagine 113 and threonine 163. The active-site Proton acceptor is the lysine 165. Residue lysine 167 participates in substrate binding. The Mg(2+) site is built by lysine 191, aspartate 193, and glutamate 194. An N6-carboxylysine modification is found at lysine 191. The active-site Proton acceptor is histidine 284. Positions 285, 317, and 369 each coordinate substrate.

The protein belongs to the RuBisCO large chain family. Type I subfamily. In terms of assembly, heterohexadecamer of 8 large chains and 8 small chains; disulfide-linked. The disulfide link is formed within the large subunit homodimers. The cofactor is Mg(2+). Post-translationally, the disulfide bond which can form in the large chain dimeric partners within the hexadecamer appears to be associated with oxidative stress and protein turnover.

The protein resides in the plastid. Its subcellular location is the chloroplast. It catalyses the reaction 2 (2R)-3-phosphoglycerate + 2 H(+) = D-ribulose 1,5-bisphosphate + CO2 + H2O. It carries out the reaction D-ribulose 1,5-bisphosphate + O2 = 2-phosphoglycolate + (2R)-3-phosphoglycerate + 2 H(+). RuBisCO catalyzes two reactions: the carboxylation of D-ribulose 1,5-bisphosphate, the primary event in carbon dioxide fixation, as well as the oxidative fragmentation of the pentose substrate in the photorespiration process. Both reactions occur simultaneously and in competition at the same active site. The sequence is that of Ribulose bisphosphate carboxylase large chain from Ruttya fruticosa (African azalea).